A 422-amino-acid chain; its full sequence is 4-hydroxy-3-methylbut-2-en-1-yl diphosphate synthase (flavodoxin) (422 aa).

[4Fe-4S] cluster contacts are provided by cysteine 316, cysteine 319, cysteine 362, and glutamate 369.

This sequence belongs to the IspG family. It depends on [4Fe-4S] cluster as a cofactor.

It catalyses the reaction (2E)-4-hydroxy-3-methylbut-2-enyl diphosphate + oxidized [flavodoxin] + H2O + 2 H(+) = 2-C-methyl-D-erythritol 2,4-cyclic diphosphate + reduced [flavodoxin]. The protein operates within isoprenoid biosynthesis; isopentenyl diphosphate biosynthesis via DXP pathway; isopentenyl diphosphate from 1-deoxy-D-xylulose 5-phosphate: step 5/6. Converts 2C-methyl-D-erythritol 2,4-cyclodiphosphate (ME-2,4cPP) into 1-hydroxy-2-methyl-2-(E)-butenyl 4-diphosphate. The protein is 4-hydroxy-3-methylbut-2-en-1-yl diphosphate synthase (flavodoxin) of Ehrlichia ruminantium (strain Gardel).